Reading from the N-terminus, the 337-residue chain is Carbonic anhydrase 14 (337 aa).

Positions 1–15 (MLFSALLLEVIWILA) are cleaved as a signal peptide. The Extracellular portion of the chain corresponds to 16–290 (ADGGQHWTYE…AGSSYTTGEM (275 aa)). In terms of domain architecture, Alpha-carbonic anhydrase spans 20 to 278 (QHWTYEGPHG…LNQRMVFASF (259 aa)). A disulfide bridge connects residues Cys40 and Cys221. His84 serves as the catalytic Proton donor/acceptor. His109, His111, and His135 together coordinate Zn(2+). Asn213 carries N-linked (GlcNAc...) asparagine glycosylation. Residue 217–218 (TT) participates in substrate binding. The chain crosses the membrane as a helical span at residues 291-311 (LSLGVGILVGCLCLLLAVYFI). The Cytoplasmic portion of the chain corresponds to 312–337 (ARKIRKKRLENRKSVVFTSAQATTEA). A Phosphoserine modification is found at Ser325.

The protein belongs to the alpha-carbonic anhydrase family. Zn(2+) serves as cofactor. In terms of tissue distribution, high expression in all parts of the central nervous system and lower expression in adult liver, heart, small intestine, colon, kidney, urinary bladder and skeletal muscle.

The protein resides in the membrane. It catalyses the reaction hydrogencarbonate + H(+) = CO2 + H2O. Activated by histamine, L-adrenaline, L- and D-histidine, and L- and D-phenylalanine. Inhibited by coumarins, saccharin, sulfonamide derivatives such as acetazolamide (AZA) and Foscarnet (phosphonoformate trisodium salt). In terms of biological role, reversible hydration of carbon dioxide. The chain is Carbonic anhydrase 14 (CA14) from Homo sapiens (Human).